The primary structure comprises 159 residues: Probable epoxidase scpX (159 aa).

The signal sequence occupies residues 1-25 (MATLIRLLRLLPVASSSAVLMFALD). 2 consecutive transmembrane segments (helical) span residues 59–79 (WVLI…LFIS) and 96–116 (LLFS…IAAI). Residues Asn-124 and Asn-136 are each glycosylated (N-linked (GlcNAc...) asparagine). A helical membrane pass occupies residues 139 to 159 (RALLTDLPAWLCFIAAALKAL).

The protein belongs to the epoxidase xenD family.

The protein localises to the membrane. It functions in the pathway mycotoxin biosynthesis. Its function is as follows. Probable epoxidase; part of the gene scp cluster that mediates the biosynthesis of a hirsutellone-like compound that has still to be identified. The chain is Probable epoxidase scpX from Mollisia scopiformis (Conifer needle endophyte fungus).